Here is a 199-residue protein sequence, read N- to C-terminus: Holliday junction branch migration complex subunit RuvA (199 aa).

A domain I region spans residues 1 to 64; the sequence is MIGRITGILL…EDGHFLYGFA (64 aa). A domain II region spans residues 65-143; it reads SADERAAFRQ…RALPGFGAST (79 aa). The segment at 144–152 is flexible linker; sequence VPGAAAQPA. Residues 152–199 are domain III; sequence ADSRSDILNALLALGYSDKEAQSALKAIPPETGVSDGIRQALKLLSKA.

This sequence belongs to the RuvA family. As to quaternary structure, homotetramer. Forms an RuvA(8)-RuvB(12)-Holliday junction (HJ) complex. HJ DNA is sandwiched between 2 RuvA tetramers; dsDNA enters through RuvA and exits via RuvB. An RuvB hexamer assembles on each DNA strand where it exits the tetramer. Each RuvB hexamer is contacted by two RuvA subunits (via domain III) on 2 adjacent RuvB subunits; this complex drives branch migration. In the full resolvosome a probable DNA-RuvA(4)-RuvB(12)-RuvC(2) complex forms which resolves the HJ.

Its subcellular location is the cytoplasm. Its function is as follows. The RuvA-RuvB-RuvC complex processes Holliday junction (HJ) DNA during genetic recombination and DNA repair, while the RuvA-RuvB complex plays an important role in the rescue of blocked DNA replication forks via replication fork reversal (RFR). RuvA specifically binds to HJ cruciform DNA, conferring on it an open structure. The RuvB hexamer acts as an ATP-dependent pump, pulling dsDNA into and through the RuvAB complex. HJ branch migration allows RuvC to scan DNA until it finds its consensus sequence, where it cleaves and resolves the cruciform DNA. In Aromatoleum aromaticum (strain DSM 19018 / LMG 30748 / EbN1) (Azoarcus sp. (strain EbN1)), this protein is Holliday junction branch migration complex subunit RuvA.